Here is a 185-residue protein sequence, read N- to C-terminus: Peptide deformylase 2 (185 aa).

Residues cysteine 108 and histidine 150 each coordinate Fe cation. The active site involves glutamate 151. Residue histidine 154 participates in Fe cation binding.

The protein belongs to the polypeptide deformylase family. It depends on Fe(2+) as a cofactor.

The enzyme catalyses N-terminal N-formyl-L-methionyl-[peptide] + H2O = N-terminal L-methionyl-[peptide] + formate. Removes the formyl group from the N-terminal Met of newly synthesized proteins. Requires at least a dipeptide for an efficient rate of reaction. N-terminal L-methionine is a prerequisite for activity but the enzyme has broad specificity at other positions. This chain is Peptide deformylase 2, found in Nitrosomonas europaea (strain ATCC 19718 / CIP 103999 / KCTC 2705 / NBRC 14298).